We begin with the raw amino-acid sequence, 337 residues long: Mycothiol acetyltransferase (337 aa).

N-acetyltransferase domains lie at 11-151 (LDER…FELP) and 154-337 (VRLR…MYRK). E37 lines the 1D-myo-inositol 2-(L-cysteinylamino)-2-deoxy-alpha-D-glucopyranoside pocket. Residue 81-83 (LVI) coordinates acetyl-CoA. E182 is a 1D-myo-inositol 2-(L-cysteinylamino)-2-deoxy-alpha-D-glucopyranoside binding site. Positions 210-246 (RPTGSGDGDVADGGSTDGGPADSGSADGGAGEGGTGD) are disordered. Residues 221–234 (DGGSTDGGPADSGS) show a composition bias toward low complexity. Residues 235–246 (ADGGAGEGGTGD) show a composition bias toward gly residues. 1D-myo-inositol 2-(L-cysteinylamino)-2-deoxy-alpha-D-glucopyranoside contacts are provided by K257 and E271. Residues 275-277 (VGV) and 282-288 (QGGGLGR) each bind acetyl-CoA. Residue Y309 participates in 1D-myo-inositol 2-(L-cysteinylamino)-2-deoxy-alpha-D-glucopyranoside binding. 314–319 (NTAAIR) lines the acetyl-CoA pocket.

It belongs to the acetyltransferase family. MshD subfamily. In terms of assembly, monomer.

The enzyme catalyses 1D-myo-inositol 2-(L-cysteinylamino)-2-deoxy-alpha-D-glucopyranoside + acetyl-CoA = mycothiol + CoA + H(+). Functionally, catalyzes the transfer of acetyl from acetyl-CoA to desacetylmycothiol (Cys-GlcN-Ins) to form mycothiol. This Streptosporangium roseum (strain ATCC 12428 / DSM 43021 / JCM 3005 / KCTC 9067 / NCIMB 10171 / NRRL 2505 / NI 9100) protein is Mycothiol acetyltransferase.